Consider the following 576-residue polypeptide: DNA mismatch repair protein MutL (576 aa).

Belongs to the DNA mismatch repair MutL/HexB family.

Its function is as follows. This protein is involved in the repair of mismatches in DNA. It is required for dam-dependent methyl-directed DNA mismatch repair. May act as a 'molecular matchmaker', a protein that promotes the formation of a stable complex between two or more DNA-binding proteins in an ATP-dependent manner without itself being part of a final effector complex. The sequence is that of DNA mismatch repair protein MutL from Chlamydia trachomatis serovar A (strain ATCC VR-571B / DSM 19440 / HAR-13).